The sequence spans 418 residues: Type II methyltransferase M.MspI (418 aa).

Residues 105–404 (FKFIDLFSGI…EQISLALKTV (300 aa)) enclose the SAM-dependent MTase C5-type domain. Cys-174 is an active-site residue.

This sequence belongs to the class I-like SAM-binding methyltransferase superfamily. C5-methyltransferase family.

It carries out the reaction a 2'-deoxycytidine in DNA + S-adenosyl-L-methionine = a 5-methyl-2'-deoxycytidine in DNA + S-adenosyl-L-homocysteine + H(+). A methylase, recognizes the double-stranded sequence 5'-CCGG-3', methylates C-1 on both strands, and protects the DNA from cleavage by the MspI endonuclease. The polypeptide is Type II methyltransferase M.MspI (mspIM) (Moraxella sp).